The chain runs to 1442 residues: Cleavage and polyadenylation specificity factor subunit 1 (1442 aa).

The protein belongs to the CPSF1 family. In terms of assembly, component of the CPSF complex, at least composed of CPSF160, CPSF100, CPSF73-I, CPSF73-II, CPSF30, FY and FIPS5. Forms a complex with cleavage and polyadenylation specificity factor (CPSF) subunits FY, CPSF30, CPSF73-I, CPSF 73-II and CPSF100.

It is found in the nucleus. In terms of biological role, CPSF plays a key role in pre-mRNA 3'-end formation, recognizing the AAUAAA signal sequence and interacting with poly(A)polymerase and other factors to bring about cleavage and poly(A) addition. This subunit is involved in the RNA recognition step of the polyadenylation reaction. This Arabidopsis thaliana (Mouse-ear cress) protein is Cleavage and polyadenylation specificity factor subunit 1 (CPSF160).